The sequence spans 316 residues: Glutamyl endopeptidase (316 aa).

The N-terminal stretch at 1-30 (MVSKKSVKRGLITGLIGISIYSLGMHPAQA) is a signal peptide. Residues 31–94 (APSPHTPVSS…SPAKAPYSIK (64 aa)) constitute a propeptide that is removed on maturation. Residues Cys-126 and Cys-142 are joined by a disulfide bond. Residues His-141 and Ser-261 each act as charge relay system in the active site. A disulfide bridge links Cys-275 with Cys-279.

Belongs to the peptidase S1B family.

The protein localises to the secreted. The catalysed reaction is Preferential cleavage: Glu-|-Xaa, Asp-|-Xaa.. Its function is as follows. Specific for hydrolysis of peptide bonds on the carboxyl side of acidic amino acid residues, with a strong preference for Glu. The polypeptide is Glutamyl endopeptidase (blaSE) (Bacillus licheniformis (strain ATCC 14580 / DSM 13 / JCM 2505 / CCUG 7422 / NBRC 12200 / NCIMB 9375 / NCTC 10341 / NRRL NRS-1264 / Gibson 46)).